The primary structure comprises 316 residues: Thymidylate synthase (316 aa).

Residues Arg-23 and 178 to 179 contribute to the dUMP site; that span reads RR. Cys-198 acts as the Nucleophile in catalysis. DUMP-binding positions include 218 to 221, Asn-229, and 259 to 261; these read RSGD and HIY. Asp-221 contributes to the (6R)-5,10-methylene-5,6,7,8-tetrahydrofolate binding site. Ala-315 contacts (6R)-5,10-methylene-5,6,7,8-tetrahydrofolate.

Belongs to the thymidylate synthase family. Bacterial-type ThyA subfamily. Homodimer.

It localises to the cytoplasm. It carries out the reaction dUMP + (6R)-5,10-methylene-5,6,7,8-tetrahydrofolate = 7,8-dihydrofolate + dTMP. Its pathway is pyrimidine metabolism; dTTP biosynthesis. Catalyzes the reductive methylation of 2'-deoxyuridine-5'-monophosphate (dUMP) to 2'-deoxythymidine-5'-monophosphate (dTMP) while utilizing 5,10-methylenetetrahydrofolate (mTHF) as the methyl donor and reductant in the reaction, yielding dihydrofolate (DHF) as a by-product. This enzymatic reaction provides an intracellular de novo source of dTMP, an essential precursor for DNA biosynthesis. This is Thymidylate synthase from Latilactobacillus sakei subsp. sakei (strain 23K) (Lactobacillus sakei subsp. sakei).